The chain runs to 326 residues: Peroxidase 39 (326 aa).

Residues 1–23 form the signal peptide; sequence MTRFGLALLMILVIQGLVTFSEA. 4 cysteine pairs are disulfide-bonded: C34–C114, C67–C72, C120–C322, and C199–C232. H65 acts as the Proton acceptor in catalysis. Ca(2+) is bound by residues D66, V69, G71, D73, and S75. A glycan (N-linked (GlcNAc...) asparagine) is linked at N79. P162 serves as a coordination point for substrate. N167 carries an N-linked (GlcNAc...) asparagine glycan. Position 192 (H192) interacts with heme b. Residue T193 coordinates Ca(2+). N-linked (GlcNAc...) asparagine glycosylation is found at N208 and N238. 3 residues coordinate Ca(2+): D245, S248, and D253.

Belongs to the peroxidase family. Classical plant (class III) peroxidase subfamily. Heme b serves as cofactor. It depends on Ca(2+) as a cofactor. Slightly expressed in roots.

It is found in the secreted. The enzyme catalyses 2 a phenolic donor + H2O2 = 2 a phenolic radical donor + 2 H2O. In terms of biological role, removal of H(2)O(2), oxidation of toxic reductants, biosynthesis and degradation of lignin, suberization, auxin catabolism, response to environmental stresses such as wounding, pathogen attack and oxidative stress. These functions might be dependent on each isozyme/isoform in each plant tissue. This is Peroxidase 39 (PER39) from Arabidopsis thaliana (Mouse-ear cress).